The following is a 258-amino-acid chain: Ribosomal RNA small subunit methyltransferase J (258 aa).

S-adenosyl-L-methionine is bound by residues 107–108, 123–124, 159–160, and Asp177; these read RD, ER, and SS.

Belongs to the methyltransferase superfamily. RsmJ family.

It is found in the cytoplasm. The enzyme catalyses guanosine(1516) in 16S rRNA + S-adenosyl-L-methionine = N(2)-methylguanosine(1516) in 16S rRNA + S-adenosyl-L-homocysteine + H(+). Specifically methylates the guanosine in position 1516 of 16S rRNA. The chain is Ribosomal RNA small subunit methyltransferase J from Shewanella sediminis (strain HAW-EB3).